Reading from the N-terminus, the 292-residue chain is Chondroitin proteoglycan 3 (292 aa).

The N-terminal stretch at 1-17 (MRFVFIIALLLIGASLA) is a signal peptide. The disordered stretch occupies residues 28–103 (DVSASEDEFS…EGSGDTSPVV (76 aa)). A compositionally biased stretch (low complexity) spans 38-80 (GDSSGEISGESSGEASGEASGEASGEASGEASGESSGETSGES). Residues 81-96 (SGDEETSGEGSGEEGS) show a composition bias toward acidic residues. N-linked (GlcNAc...) asparagine glycans are attached at residues N174 and N254.

The protein is Chondroitin proteoglycan 3 of Caenorhabditis elegans.